Reading from the N-terminus, the 97-residue chain is Translation initiation factor 1A (97 aa).

The S1-like domain maps to 8–82; the sequence is IRVRLPDRKK…DRADIVWRYT (75 aa).

It belongs to the eIF-1A family.

In terms of biological role, seems to be required for maximal rate of protein biosynthesis. Enhances ribosome dissociation into subunits and stabilizes the binding of the initiator Met-tRNA(I) to 40 S ribosomal subunits. This is Translation initiation factor 1A (eIF1A) from Archaeoglobus fulgidus (strain ATCC 49558 / DSM 4304 / JCM 9628 / NBRC 100126 / VC-16).